We begin with the raw amino-acid sequence, 451 residues long: Ribulose bisphosphate carboxylase large chain (451 aa).

Lys5 is subject to N6,N6,N6-trimethyllysine. Substrate-binding residues include Asn114 and Thr164. The active-site Proton acceptor is Lys166. Position 168 (Lys168) interacts with substrate. Mg(2+) is bound by residues Lys192, Asp194, and Glu195. Lys192 is subject to N6-carboxylysine. His285 (proton acceptor) is an active-site residue. Substrate contacts are provided by Arg286, His318, and Ser370.

The protein belongs to the RuBisCO large chain family. Type I subfamily. In terms of assembly, heterohexadecamer of 8 large chains and 8 small chains; disulfide-linked. The disulfide link is formed within the large subunit homodimers. Mg(2+) is required as a cofactor. Post-translationally, the disulfide bond which can form in the large chain dimeric partners within the hexadecamer appears to be associated with oxidative stress and protein turnover.

It is found in the plastid. Its subcellular location is the chloroplast. The enzyme catalyses 2 (2R)-3-phosphoglycerate + 2 H(+) = D-ribulose 1,5-bisphosphate + CO2 + H2O. It catalyses the reaction D-ribulose 1,5-bisphosphate + O2 = 2-phosphoglycolate + (2R)-3-phosphoglycerate + 2 H(+). Its function is as follows. RuBisCO catalyzes two reactions: the carboxylation of D-ribulose 1,5-bisphosphate, the primary event in carbon dioxide fixation, as well as the oxidative fragmentation of the pentose substrate in the photorespiration process. Both reactions occur simultaneously and in competition at the same active site. The protein is Ribulose bisphosphate carboxylase large chain of Aristea glauca.